Consider the following 205-residue polypeptide: Ribosome maturation factor RimP (205 aa).

This sequence belongs to the RimP family.

The protein localises to the cytoplasm. Its function is as follows. Required for maturation of 30S ribosomal subunits. The polypeptide is Ribosome maturation factor RimP (Sinorhizobium medicae (strain WSM419) (Ensifer medicae)).